The chain runs to 315 residues: Ribosomal RNA small subunit methyltransferase H (315 aa).

Residues alanine 35–histidine 37, aspartate 55, phenylalanine 84, aspartate 105, and glutamine 112 each bind S-adenosyl-L-methionine.

It belongs to the methyltransferase superfamily. RsmH family.

Its subcellular location is the cytoplasm. The enzyme catalyses cytidine(1402) in 16S rRNA + S-adenosyl-L-methionine = N(4)-methylcytidine(1402) in 16S rRNA + S-adenosyl-L-homocysteine + H(+). Functionally, specifically methylates the N4 position of cytidine in position 1402 (C1402) of 16S rRNA. In Streptococcus agalactiae serotype Ia (strain ATCC 27591 / A909 / CDC SS700), this protein is Ribosomal RNA small subunit methyltransferase H.